The primary structure comprises 401 residues: Nodal homolog 3-C (401 aa).

Residues 1–18 (MAFLSLFLCLVFSSPLMA) form the signal peptide. Residues 19 to 274 (MPPALQGRKA…KVNGFRRLRR (256 aa)) constitute a propeptide that is removed on maturation. N-linked (GlcNAc...) asparagine glycans are attached at residues asparagine 168, asparagine 337, and asparagine 344. Intrachain disulfides connect cysteine 299–cysteine 365 and cysteine 328–cysteine 396.

The protein belongs to the TGF-beta family. In terms of assembly, monomer. The propeptide region interacts with bmp4 in a non-covalent manner. As to expression, expressed in the dorsal marginal region of late blastula, becoming restricted to the Spemann organizer at the early gastrula stage.

It localises to the secreted. Exhibits mesoderm-dorsalizing activity and neural-inducing activity, but lacks mesoderm-inducing activity. Regulates the expression of specific mesodermal and neural genes. Induces convergent extension movements at the embryonic midline by activating the fgf signaling pathway to induce t/bra expression in the organizer region. Acts with wnt11 to induce Spemann organizer cells and induce axis formation. The unprocessed protein antagonizes bmp-signaling. This is Nodal homolog 3-C from Xenopus tropicalis (Western clawed frog).